The chain runs to 145 residues: Copper transporter 4 (145 aa).

2 helical membrane passes run 53 to 73 and 106 to 126; these read GMYA…EWLA and YLVI…AIFG.

Belongs to the copper transporter (Ctr) (TC 1.A.56) family. SLC31A subfamily. Highly expressed in roots and at lower levels in leaves, stems and flowers.

It localises to the membrane. Functionally, involved in the transport of copper. The polypeptide is Copper transporter 4 (COPT4) (Arabidopsis thaliana (Mouse-ear cress)).